The chain runs to 1516 residues: AP-4 complex accessory subunit RUSC2 (1516 aa).

6 disordered regions span residues 33 to 105 (AGGG…PFLL), 202 to 224 (LDEC…SGFS), 229 to 248 (WKLS…SGDQ), 331 to 351 (SKMS…GYGC), 404 to 445 (LSSQ…PSEY), and 478 to 511 (GQVY…PVRL). Positions 66–81 (LFSSLHSTPGGTARSI) are enriched in polar residues. Residues 82-92 (DSTKSRSRDGR) are compositionally biased toward basic and acidic residues. The span at 206–217 (GGPGGSGSGGGA) shows a compositional bias: gly residues. Positions 333–344 (MSYESHHPESGG) are enriched in basic and acidic residues. The span at 405 to 420 (SSQSSPSPAGSSITSC) shows a compositional bias: low complexity. Residues 428–440 (SPPPGPGPDPGPS) are compositionally biased toward pro residues. The segment covering 480-493 (VYTNTSPPNLSTGR) has biased composition (polar residues). 3 positions are modified to phosphoserine: S536, S543, and S559. 4 disordered regions span residues 550-588 (GRKK…APLD), 646-688 (LMDP…KEQR), 727-836 (RTQQ…PQKE), and 868-889 (ESLA…ANHL). Residues 567–579 (GDSSQEFSPIQEA) show a composition bias toward polar residues. S656 carries the phosphoserine modification. Low complexity predominate over residues 729–746 (QQPAPLAAPAAQVSVPAP). The residue at position 781 (S781) is a Phosphoserine. The span at 791–801 (PSTDSSASTSC) shows a compositional bias: low complexity. An RUN domain is found at 1031–1175 (NVGHLVLKYL…LPFSLDLLFQ (145 aa)). 3 disordered regions span residues 1210–1261 (RARG…GRAR), 1286–1408 (IEGS…LPSD), and 1422–1449 (QTVG…SSPP). The span at 1219–1230 (DVDRAAQGERVK) shows a compositional bias: basic and acidic residues. The segment covering 1237 to 1251 (GGEEEEEEEETEEVA) has biased composition (acidic residues). Over residues 1355-1364 (ELRRSREREG) the composition is skewed to basic and acidic residues. Residues S1368 and S1380 each carry the phosphoserine modification. The span at 1426–1437 (SRREPEPKESLQ) shows a compositional bias: basic and acidic residues. Residues 1447 to 1506 (SPPCEVQALCHHLATGPGQLSFHKGDILRVLGRAGGDWLRCSRGPDSGLVPLAYVTLTPT) form the SH3 domain.

As to quaternary structure, associated component of the adapter-like complex 4 (AP-4). Interacts with active RAB1A and RAB1B, and with GOLGA2. Interacts (via RUN domain) with RAB35 (GTP-bound form); the interaction recruits RUSC2 to the plasma membrane. As to expression, widely expressed, with highest levels in brain and testis.

Its subcellular location is the cytoplasm. It localises to the cytosol. It is found in the cell membrane. Functionally, associates with the adapter-like complex 4 (AP-4) and may therefore play a role in vesicular trafficking of proteins at the trans-Golgi network. This is AP-4 complex accessory subunit RUSC2 from Homo sapiens (Human).